Consider the following 309-residue polypeptide: GTP cyclohydrolase MptA (309 aa).

It belongs to the GTP cyclohydrolase IV family. As to quaternary structure, homodimer. Fe(2+) serves as cofactor.

It carries out the reaction GTP + H2O = 7,8-dihydroneopterin 2',3'-cyclic phosphate + formate + diphosphate + H(+). It participates in cofactor biosynthesis; 5,6,7,8-tetrahydromethanopterin biosynthesis. Converts GTP to 7,8-dihydro-D-neopterin 2',3'-cyclic phosphate, the first intermediate in the biosynthesis of coenzyme methanopterin. This is GTP cyclohydrolase MptA from Methanococcus aeolicus (strain ATCC BAA-1280 / DSM 17508 / OCM 812 / Nankai-3).